The following is a 196-amino-acid chain: Probable malonic semialdehyde reductase RutE (196 aa).

The protein belongs to the nitroreductase family. HadB/RutE subfamily. It depends on FMN as a cofactor.

It catalyses the reaction 3-hydroxypropanoate + NADP(+) = 3-oxopropanoate + NADPH + H(+). In terms of biological role, may reduce toxic product malonic semialdehyde to 3-hydroxypropionic acid, which is excreted. The sequence is that of Probable malonic semialdehyde reductase RutE from Escherichia coli O45:K1 (strain S88 / ExPEC).